The sequence spans 492 residues: UDP-N-acetylmuramyl-tripeptide synthetase 2 (492 aa).

Position 30 (serine 30) interacts with UDP-N-acetyl-alpha-D-muramoyl-L-alanyl-D-glutamate. Residue 111–117 coordinates ATP; sequence GTNGKTT. UDP-N-acetyl-alpha-D-muramoyl-L-alanyl-D-glutamate contacts are provided by residues 154 to 155, serine 181, glutamine 187, and arginine 189; that span reads TT. At lysine 221 the chain carries N6-carboxylysine.

This sequence belongs to the MurCDEF family. MurE subfamily. Post-translationally, carboxylation is probably crucial for Mg(2+) binding and, consequently, for the gamma-phosphate positioning of ATP.

The protein resides in the cytoplasm. It participates in cell wall biogenesis; peptidoglycan biosynthesis. Functionally, catalyzes the addition of an amino acid to the nucleotide precursor UDP-N-acetylmuramoyl-L-alanyl-D-glutamate (UMAG) in the biosynthesis of bacterial cell-wall peptidoglycan. The protein is UDP-N-acetylmuramyl-tripeptide synthetase 2 of Oceanobacillus iheyensis (strain DSM 14371 / CIP 107618 / JCM 11309 / KCTC 3954 / HTE831).